The following is a 155-amino-acid chain: MLEREDPVMLFAGIRAAQEELGKRVDCRGLNAGTEEPLAIDLQRFTVSLKTAWQAGEKRPTHRRPYRRTKPYPKRPSMLEPFEPQIRAWLEADPALSAAAVLQRLVSADPSRFTKKALRTVQMAVKAWRMEIAGQIILDGDWMKRAPVSQCPQLQ.

The segment at 56-79 (GEKRPTHRRPYRRTKPYPKRPSML) is disordered. The segment covering 60–73 (PTHRRPYRRTKPYP) has biased composition (basic residues).

This is an uncharacterized protein from Sinorhizobium fredii (strain NBRC 101917 / NGR234).